A 255-amino-acid polypeptide reads, in one-letter code: MARRPLVMGNWKLNGSKAFTKELITGLKDELNAVSGCDVAIAPPVMYLAEAETALVSSDIALGTQNVDLNKQGAFTGDISTEMLKDFGVKYVIIGHSERRQYHHESDEFIAKKFGVLKDAGLVPVLCIGESEAENEAGKTEEVCARQIDAVMNTLGVEAFNGAVIAYEPIWAIGTGKSATPAQAQAVHAFIRGHIAKQSQAVAERVIIQYGGSVNDANAAELFTQPDIDGALVGGASLKASAFAVIVKAAAKAKN.

10-12 (NWK) is a substrate binding site. Histidine 96 serves as the catalytic Electrophile. The active-site Proton acceptor is the glutamate 168. Residues glycine 174, serine 213, and 234–235 (GG) contribute to the substrate site.

This sequence belongs to the triosephosphate isomerase family. In terms of assembly, homodimer.

The protein localises to the cytoplasm. It carries out the reaction D-glyceraldehyde 3-phosphate = dihydroxyacetone phosphate. The protein operates within carbohydrate biosynthesis; gluconeogenesis. It functions in the pathway carbohydrate degradation; glycolysis; D-glyceraldehyde 3-phosphate from glycerone phosphate: step 1/1. Its function is as follows. Involved in the gluconeogenesis. Catalyzes stereospecifically the conversion of dihydroxyacetone phosphate (DHAP) to D-glyceraldehyde-3-phosphate (G3P). The polypeptide is Triosephosphate isomerase (Histophilus somni (strain 129Pt) (Haemophilus somnus)).